Here is a 446-residue protein sequence, read N- to C-terminus: uncharacterized protein (446 aa).

Disordered regions lie at residues 198 to 233, 309 to 337, and 394 to 431; these read SIQK…ENYS, NEDN…DDSK, and SESV…FGNT. The span at 199–224 shows a compositional bias: low complexity; it reads IQKQIPKQTQEQTQKQTQEQTQESSQ. Residues 317 to 333 show a composition bias toward acidic residues; it reads DNEEDSDESDIESDSDL. Positions 397-418 are enriched in basic and acidic residues; that stretch reads VKSDSNESKSIKPESIKSESIK.

This is an uncharacterized protein from Acanthamoeba polyphaga mimivirus (APMV).